The sequence spans 411 residues: MGEKRKSRQAEVNIGMVGHVDHGKTTLTKALTGVWTDTHSEELRRGITIKIGFADAEIRRCPNCGRYSTSPVCPYCGHETEFVRRVSFIDAPGHEALMTTMLAGASLMDGAILVIAANEPCPRPQTREHLMALQIIGQKNIIIAQNKIELVDKEKALENYRQIKEFIEGTVAENAPIIPISALHGANIDVLVKAIEDFIPTPKRDPNKPPKMLVLRSFDVNKPGTPPEKLVGGVLGGSIVQGKLKVGDEIEIRPGVPYEEHGRIKYEPITTEIVSLQAGGQFVEEAYPGGLVGVGTKLDPYLTKGDLMAGNVVGKPGKLPPVWDSLRLEVHLLERVVGTEQELKVEPIKRKEVLLLNVGTARTMGLVTGLGKDEIEVKLQIPVCAEPGDRVAISRQIGSRWRLIGYGIIKE.

One can recognise a tr-type G domain in the interval 9 to 203 (QAEVNIGMVG…AIEDFIPTPK (195 aa)). A G1 region spans residues 18 to 25 (GHVDHGKT). Mg(2+) contacts are provided by Asp-21, Thr-25, Gly-46, and Thr-48. A GTP-binding site is contributed by 21–26 (DHGKTT). The segment at 46-50 (GITIK) is G2. Zn(2+) contacts are provided by Cys-61, Cys-64, Cys-73, and Cys-76. The G3 stretch occupies residues 90–93 (DAPG). GTP-binding positions include 146–149 (NKIE) and 181–183 (SAL). A G4 region spans residues 146-149 (NKIE). A G5 region spans residues 181–183 (SAL).

The protein belongs to the TRAFAC class translation factor GTPase superfamily. Classic translation factor GTPase family. EIF2G subfamily. As to quaternary structure, heterotrimer composed of an alpha, a beta and a gamma chain. Mg(2+) serves as cofactor.

The catalysed reaction is GTP + H2O = GDP + phosphate + H(+). Its function is as follows. eIF-2 functions in the early steps of protein synthesis by forming a ternary complex with GTP and initiator tRNA. The chain is Translation initiation factor 2 subunit gamma from Pyrococcus abyssi (strain GE5 / Orsay).